The following is a 997-amino-acid chain: Mannuronan C5-epimerase AlgE5 (997 aa).

PbH1 repeat units lie at residues 133 to 155, 157 to 179, 180 to 202, 204 to 226, 257 to 279, 280 to 315, and 320 to 359; these read DRDV…DPHE, TINL…VADF, QIGG…NIVT, TNDF…VIQR, AHDV…RVYG, AEDV…GVSG, and TTGT…SVSN. Hemolysin-type calcium-binding repeat units lie at residues 388–403, 406–422, 424–439, 557–573, 574–590, 695–709, 712–729, 828–839, 846–862, and 864–880; these read GTTG…AHET, GLDG…NDIL, GGAG…GADL, GHAG…DDIL, VGGA…GADL, GSAG…AADE, HGGA…ADVF, GSDGNDTLDGGS, GGAG…NDIL, and GGAG…SDIF.

Belongs to the D-mannuronate C5-epimerase family. Ca(2+) serves as cofactor.

The protein localises to the secreted. The catalysed reaction is [(1-&gt;4)-beta-D-mannuronosyl](n) = [alginate](n). It participates in glycan biosynthesis; alginate biosynthesis. With respect to regulation, inhibited by zinc. Converts beta-D-mannuronic acid (M) to alpha-L-guluronic acid (G), producing a polymer with gel-forming capacity, required for the formation of the cyst coat. The chain is Mannuronan C5-epimerase AlgE5 from Azotobacter vinelandii.